Reading from the N-terminus, the 321-residue chain is Dolichyl N-acetyl-alpha-D-glucosaminyl phosphate 3-beta-D-2,3-diacetamido-2,3-dideoxy-beta-D-glucuronosyltransferase (321 aa).

2 consecutive transmembrane segments (helical) span residues 252 to 272 (FGFL…FIYI) and 290 to 310 (LYIA…YGFF).

This sequence belongs to the glycosyltransferase 2 family.

The protein localises to the cell membrane. It carries out the reaction an archaeal dolichyl N-acetyl-alpha-D-glucosaminyl phosphate + UDP-2,3-diacetamido-2,3-dideoxy-alpha-D-glucuronate = an archaeal dolichyl 3-O-(2,3-diacetamido-2,3-dideoxy- beta-D-glucuronosyl)-N-acetyl- alpha-D-glucosaminyl phosphate + UDP + H(+). Its pathway is cell surface structure biogenesis; S-layer biogenesis. It participates in protein modification; protein glycosylation. Functionally, involved in the assembly of an N-linked disaccharide that decorates the S-layer glycoprotein and flagellins. AglC catalyzes the transfer of 2,3-diacetamido-2,3-dideoxy-alpha-D-glucuronic acid (Glc-2,3-diNAcA) from uridine 5'-diphospho 2,3-diacetamido-2,3-dideoxy-alpha-D-glucuronic acid (UDP-Glc-2,3-diNAcA) to the AglK product Dol-P-GlcNAc to yield Dol-P-GlcNAc-Glc-2,3-diNAcA. AglC is specific for the monophosphate-linked Dol-P-GlcNAc. This Methanococcus voltae protein is Dolichyl N-acetyl-alpha-D-glucosaminyl phosphate 3-beta-D-2,3-diacetamido-2,3-dideoxy-beta-D-glucuronosyltransferase.